The following is a 358-amino-acid chain: 3-isopropylmalate dehydrogenase 2 (358 aa).

Position 74-87 (74-87) interacts with NAD(+); the sequence is GPKWDKLPAESRPE. Positions 94, 104, 132, and 221 each coordinate substrate. Residues aspartate 221, aspartate 245, and aspartate 249 each coordinate Mg(2+). An NAD(+)-binding site is contributed by 279–291; that stretch reads GSAPDIAGQGVAN.

The protein belongs to the isocitrate and isopropylmalate dehydrogenases family. LeuB type 1 subfamily. Homodimer. Requires Mg(2+) as cofactor. It depends on Mn(2+) as a cofactor.

The protein localises to the cytoplasm. The enzyme catalyses (2R,3S)-3-isopropylmalate + NAD(+) = 4-methyl-2-oxopentanoate + CO2 + NADH. Its pathway is amino-acid biosynthesis; L-leucine biosynthesis; L-leucine from 3-methyl-2-oxobutanoate: step 3/4. Functionally, catalyzes the oxidation of 3-carboxy-2-hydroxy-4-methylpentanoate (3-isopropylmalate) to 3-carboxy-4-methyl-2-oxopentanoate. The product decarboxylates to 4-methyl-2 oxopentanoate. The polypeptide is 3-isopropylmalate dehydrogenase 2 (Dechloromonas aromatica (strain RCB)).